Reading from the N-terminus, the 169-residue chain is Photosystem I assembly protein Ycf3 (169 aa).

3 TPR repeats span residues 35 to 68, 72 to 105, and 120 to 153; these read AFTY…ETDP, SYIL…NPSL, and GEQA…APGN.

It belongs to the Ycf3 family.

The protein localises to the plastid. It is found in the chloroplast thylakoid membrane. Essential for the assembly of the photosystem I (PSI) complex. May act as a chaperone-like factor to guide the assembly of the PSI subunits. In Pinus koraiensis (Korean pine), this protein is Photosystem I assembly protein Ycf3.